Consider the following 187-residue polypeptide: Large ribosomal subunit protein mL49 (187 aa).

Belongs to the mitochondrion-specific ribosomal protein mL49 family.

It localises to the mitochondrion. The chain is Large ribosomal subunit protein mL49 (mrpl-49) from Caenorhabditis elegans.